The sequence spans 319 residues: Ribosomal RNA small subunit methyltransferase H (319 aa).

Residues 35 to 37 (AGH), Asp55, Phe84, Asp104, and Gln111 each bind S-adenosyl-L-methionine.

This sequence belongs to the methyltransferase superfamily. RsmH family.

Its subcellular location is the cytoplasm. The enzyme catalyses cytidine(1402) in 16S rRNA + S-adenosyl-L-methionine = N(4)-methylcytidine(1402) in 16S rRNA + S-adenosyl-L-homocysteine + H(+). Functionally, specifically methylates the N4 position of cytidine in position 1402 (C1402) of 16S rRNA. The sequence is that of Ribosomal RNA small subunit methyltransferase H from Enterococcus hirae.